A 660-amino-acid chain; its full sequence is tRNA 5-methylaminomethyl-2-thiouridine biosynthesis bifunctional protein MnmC (660 aa).

The tract at residues 1–235 is tRNA (mnm(5)s(2)U34)-methyltransferase; the sequence is MTITRHARID…KWEVLRGAFI (235 aa). Positions 266 to 660 are FAD-dependent cmnm(5)s(2)U34 oxidoreductase; that stretch reads IGAGLAGCAT…LRGLIRGGGK (395 aa).

In the N-terminal section; belongs to the methyltransferase superfamily. tRNA (mnm(5)s(2)U34)-methyltransferase family. The protein in the C-terminal section; belongs to the DAO family. FAD is required as a cofactor.

The protein localises to the cytoplasm. The catalysed reaction is 5-aminomethyl-2-thiouridine(34) in tRNA + S-adenosyl-L-methionine = 5-methylaminomethyl-2-thiouridine(34) in tRNA + S-adenosyl-L-homocysteine + H(+). Catalyzes the last two steps in the biosynthesis of 5-methylaminomethyl-2-thiouridine (mnm(5)s(2)U) at the wobble position (U34) in tRNA. Catalyzes the FAD-dependent demodification of cmnm(5)s(2)U34 to nm(5)s(2)U34, followed by the transfer of a methyl group from S-adenosyl-L-methionine to nm(5)s(2)U34, to form mnm(5)s(2)U34. This chain is tRNA 5-methylaminomethyl-2-thiouridine biosynthesis bifunctional protein MnmC, found in Pseudomonas syringae pv. tomato (strain ATCC BAA-871 / DC3000).